We begin with the raw amino-acid sequence, 89 residues long: Protein M7 (89 aa).

A signal peptide spans 1-25 (MAAMKSLATAILVVLLLRRLPRGLS). Cystine bridges form between Cys-28–Cys-65, Cys-38–Cys-54, Cys-55–Cys-80, and Cys-67–Cys-87.

It belongs to the A9/FIL1 family. Tapetum of anthers.

It is found in the secreted. The protein is Protein M7 (M7) of Lilium henryi (Henry's lily).